Reading from the N-terminus, the 572-residue chain is Arginine--tRNA ligase (572 aa).

A 'HIGH' region motif is present at residues 121–131 (PNLAKEMHVGH).

Belongs to the class-I aminoacyl-tRNA synthetase family. In terms of assembly, monomer.

It localises to the cytoplasm. It carries out the reaction tRNA(Arg) + L-arginine + ATP = L-arginyl-tRNA(Arg) + AMP + diphosphate. The chain is Arginine--tRNA ligase from Chromobacterium violaceum (strain ATCC 12472 / DSM 30191 / JCM 1249 / CCUG 213 / NBRC 12614 / NCIMB 9131 / NCTC 9757 / MK).